A 492-amino-acid polypeptide reads, in one-letter code: uncharacterized protein (492 aa).

Helical transmembrane passes span 16 to 36, 39 to 59, 107 to 127, 133 to 153, 162 to 182, 210 to 230, 243 to 263, 291 to 311, 350 to 370, 394 to 414, 429 to 449, and 454 to 474; these read FIAFVFNYIAGFGFISVVMTM, VGPFSYLVLGLTSFAILGVVL, SFNGVVIPAVLIFSFADIPVV, IIIGLLVGGFLLFGLLTFISL, AIFYFAVIKWIVVIGGFILGI, IIFISLALTIAFAGTEDLASI, FLIAFGCVVLLYLVGFVIISG, LVGGVPLLVIYGLGLLVNSLA, VLISNLMTLLVMLIMVIIPFL, MAAAISLIQYFITFIFFFMIF, VSYVISFALVSVLLFVPLFPF, and VFNTFKIVVLICFYLLGVGFF.

It to M.genitalium MG225.

It localises to the cell membrane. This is an uncharacterized protein from Mycoplasma genitalium (strain ATCC 33530 / DSM 19775 / NCTC 10195 / G37) (Mycoplasmoides genitalium).